Consider the following 402-residue polypeptide: Nicotinate phosphoribosyltransferase (402 aa).

Histidine 226 bears the Phosphohistidine; by autocatalysis mark.

The protein belongs to the NAPRTase family. In terms of processing, transiently phosphorylated on a His residue during the reaction cycle. Phosphorylation strongly increases the affinity for substrates and increases the rate of nicotinate D-ribonucleotide production. Dephosphorylation regenerates the low-affinity form of the enzyme, leading to product release.

It carries out the reaction nicotinate + 5-phospho-alpha-D-ribose 1-diphosphate + ATP + H2O = nicotinate beta-D-ribonucleotide + ADP + phosphate + diphosphate. The protein operates within cofactor biosynthesis; NAD(+) biosynthesis; nicotinate D-ribonucleotide from nicotinate: step 1/1. In terms of biological role, catalyzes the synthesis of beta-nicotinate D-ribonucleotide from nicotinate and 5-phospho-D-ribose 1-phosphate at the expense of ATP. The protein is Nicotinate phosphoribosyltransferase of Chromobacterium violaceum (strain ATCC 12472 / DSM 30191 / JCM 1249 / CCUG 213 / NBRC 12614 / NCIMB 9131 / NCTC 9757 / MK).